The chain runs to 132 residues: Small ribosomal subunit protein uS8 (132 aa).

The protein belongs to the universal ribosomal protein uS8 family. As to quaternary structure, part of the 30S ribosomal subunit. Contacts proteins S5 and S12.

Functionally, one of the primary rRNA binding proteins, it binds directly to 16S rRNA central domain where it helps coordinate assembly of the platform of the 30S subunit. In Brevibacillus brevis (strain 47 / JCM 6285 / NBRC 100599), this protein is Small ribosomal subunit protein uS8.